The following is a 408-amino-acid chain: Retron Ec48 reverse transcriptase (408 aa).

The Reverse transcriptase domain occupies 43-269 (EELKAIAELP…EPIKVHGLRV (227 aa)). Mg(2+)-binding residues include aspartate 137, aspartate 216, and aspartate 217.

The protein belongs to the bacterial reverse transcriptase family.

It carries out the reaction DNA(n) + a 2'-deoxyribonucleoside 5'-triphosphate = DNA(n+1) + diphosphate. Its function is as follows. Reverse transcriptase (RT) component of antiviral defense system retron Ec48, composed of a non-coding RNA (ncRNA), this reverse transcriptase (RT) and the following membrane protein. Expression of this retron confers protection against bacteriophages lambda, T2, T4, T5 and T7. At multiplicity of infection (MOI) of 0.02 cultures grow normally when infected with lambda without collapsing, at MOI 2 cultures enter growth stasis. At MOI 3 cell membranes are permeabilized within 15 minutes of infection but do not lyse, suggesting the phage are not able to finish a replication cycle. Antiviral defense is suppressed by mutations that knockout the lambda gam expression or phage T7 gp5.9 expression; both viral genes inhibit host RecBCD. The Ec48 retron may sense the integrity of the RecBCD enzyme; when RecBCD is perturbed by viral proteins the Ec48 effector (the membrane protein) is activated, leading to abortive infection and bacterial growth arrest. Responsible for synthesis of msDNA-Ec48 (a branched molecule with RNA linked by a 2',5'-phosphodiester bond to ssDNA). The retron transcript serves as primer (from a conserved internal G residue) and template for the reaction, and codes for the RT. This chain is Retron Ec48 reverse transcriptase, found in Escherichia coli.